A 674-amino-acid polypeptide reads, in one-letter code: tRNA 5-methylaminomethyl-2-thiouridine biosynthesis bifunctional protein MnmC (674 aa).

The interval M1 to A248 is tRNA (mnm(5)s(2)U34)-methyltransferase. Positions I276 to R674 are FAD-dependent cmnm(5)s(2)U34 oxidoreductase.

It in the N-terminal section; belongs to the methyltransferase superfamily. tRNA (mnm(5)s(2)U34)-methyltransferase family. The protein in the C-terminal section; belongs to the DAO family. Requires FAD as cofactor.

The protein resides in the cytoplasm. The catalysed reaction is 5-aminomethyl-2-thiouridine(34) in tRNA + S-adenosyl-L-methionine = 5-methylaminomethyl-2-thiouridine(34) in tRNA + S-adenosyl-L-homocysteine + H(+). In terms of biological role, catalyzes the last two steps in the biosynthesis of 5-methylaminomethyl-2-thiouridine (mnm(5)s(2)U) at the wobble position (U34) in tRNA. Catalyzes the FAD-dependent demodification of cmnm(5)s(2)U34 to nm(5)s(2)U34, followed by the transfer of a methyl group from S-adenosyl-L-methionine to nm(5)s(2)U34, to form mnm(5)s(2)U34. The protein is tRNA 5-methylaminomethyl-2-thiouridine biosynthesis bifunctional protein MnmC of Hydrogenovibrio crunogenus (strain DSM 25203 / XCL-2) (Thiomicrospira crunogena).